Here is a 481-residue protein sequence, read N- to C-terminus: MKMTDFNTQQANNLSEHVSKKEAEMAEVLAKIVRDKYQWVAERKASQHLSTFQSDLLPSDRSFYDALSGDKTVFITECKKASPSKGLIRNDFDLDYIASVYNNYADAISVLTDEKYFQGSFDFLPQVRRQVKQPVLCKDFMVDTYQVYLARHYGADAVLLMLSVLNDEEYKALEEAAHSLNMGILTEVSNEEELHRAVQLGARVIGINNRNLRDLTTDLNRTKALAPTIRKLAPNATVISESGIYTHQQVRDLAEYADGFLIGSSLMAEDNLELAVRKVTLGENKVCGLTHPDDAAKAYQAGAVFGGLIFVEKSKRAVDFESARLTMSGAPLNYVGVFQNHDVDYVASIVTSLGLKAVQLHGLEDQEYVNQLKTELPVGVEIWKAYGVADTKPSLLADNIDRHLLDAQVGTQTGGTGHVFDWSLIGDPSQIMLAGGLSPENAQQAAKLGCLGLDLNSGVESAPGKKDSQKLQAAFHAIRNY.

Residues 1-283 (MKMTDFNTQQ…LAVRKVTLGE (283 aa)) are indole-3-glycerol phosphate synthase. The interval 284-481 (NKVCGLTHPD…QAAFHAIRNY (198 aa)) is N-(5'-phosphoribosyl)anthranilate isomerase.

This sequence in the N-terminal section; belongs to the TrpC family. It in the C-terminal section; belongs to the TrpF family. As to quaternary structure, monomer.

It carries out the reaction N-(5-phospho-beta-D-ribosyl)anthranilate = 1-(2-carboxyphenylamino)-1-deoxy-D-ribulose 5-phosphate. It catalyses the reaction 1-(2-carboxyphenylamino)-1-deoxy-D-ribulose 5-phosphate + H(+) = (1S,2R)-1-C-(indol-3-yl)glycerol 3-phosphate + CO2 + H2O. The protein operates within amino-acid biosynthesis; L-tryptophan biosynthesis; L-tryptophan from chorismate: step 3/5. Its pathway is amino-acid biosynthesis; L-tryptophan biosynthesis; L-tryptophan from chorismate: step 4/5. In terms of biological role, bifunctional enzyme that catalyzes two sequential steps of tryptophan biosynthetic pathway. The first reaction is catalyzed by the isomerase, coded by the TrpF domain; the second reaction is catalyzed by the synthase, coded by the TrpC domain. This Vibrio parahaemolyticus serotype O3:K6 (strain RIMD 2210633) protein is Tryptophan biosynthesis protein TrpCF (trpC).